The sequence spans 660 residues: Anoctamin-10 (660 aa).

Over 1 to 207 (MKVTLSALDT…DSIRGYFGET (207 aa)) the chain is Cytoplasmic. A helical transmembrane segment spans residues 208 to 228 (IALYFGFLEYFTFALIPMAVI). Over 229 to 240 (GLPYYLFVWEDY) the chain is Extracellular. The chain crosses the membrane as a helical span at residues 241–261 (DKYVIFASFNLIWSTVILELW). At 262-316 (KRGCANMTYRWGTLLMKRKFEEPRPGFHGVLGINSITGKEEPLYPSYKRQLRIYL) the chain is on the cytoplasmic side. The helical transmembrane segment at 317-337 (VSLPFVCLCLYFSLYVMMIYF) threads the bilayer. At 338–352 (DMEVWALGLHENSGS) the chain is on the extracellular side. The helical transmembrane segment at 353–373 (EWTSVLLYVPSIIYAIVIEIM) threads the bilayer. Residues 374-400 (NRLYRYAAEFLTSWENHRLESAYQNHL) are Cytoplasmic-facing. Residues 401–421 (ILKVLVFNFLNCFASLFYIAF) traverse the membrane as a helical segment. The Extracellular portion of the chain corresponds to 422-500 (VLKDMKLLRQ…YLGTFDDYLE (79 aa)). Residues 501-521 (LFLQFGYVSLFSCVYPLAAAF) form a helical membrane-spanning segment. Over 522-553 (AVLNNFTEVNSDALKMCRVFKRPFSEPSANIG) the chain is Cytoplasmic. A helical membrane pass occupies residues 554-574 (VWQLAFETMSVISVVTNCALI). Residues 575 to 590 (GMSPQVNAVFPESKAD) lie on the Extracellular side of the membrane. The chain crosses the membrane as a helical span at residues 591–611 (LILIVVAVEHALLALKFILAF). The Cytoplasmic segment spans residues 612–660 (AIPDKPRHIQMKLARLEFESLEALKQQQMKLVTENLKEEPMESGKEKAT).

It belongs to the anoctamin family. As to expression, highly expressed in the brain. Intermediate levels in the retina and heart and low levels in the placenta, liver, lung, duodenum, kidney, testis and spleen. In brain areas, highest expression in the frontal and occipital cortices and in the cerebellum. Lower expression in the fetal brain than in the adult brain.

The protein localises to the cell membrane. Its function is as follows. Does not exhibit calcium-activated chloride channel (CaCC) activity. Can inhibit the activity of ANO1. This chain is Anoctamin-10 (ANO10), found in Homo sapiens (Human).